Here is a 428-residue protein sequence, read N- to C-terminus: Threonine synthase (428 aa).

Lys107 is modified (N6-(pyridoxal phosphate)lysine).

Belongs to the threonine synthase family. Pyridoxal 5'-phosphate serves as cofactor.

It carries out the reaction O-phospho-L-homoserine + H2O = L-threonine + phosphate. Its pathway is amino-acid biosynthesis; L-threonine biosynthesis; L-threonine from L-aspartate: step 5/5. With respect to regulation, is competitively inhibited by L-threo-3-hydroxyhomoserine phosphate. Functionally, catalyzes the gamma-elimination of phosphate from L-phosphohomoserine and the beta-addition of water to produce L-threonine. To a lesser extent, is able to slowly catalyze the deamination of L-threonine into alpha-ketobutyrate and that of L-serine and 3-chloroalanine into pyruvate. Is also able to rapidly convert vinylglycine to threonine, which proves that the pyridoxal p-quinonoid of vinylglycine is an intermediate in the TS reaction. The sequence is that of Threonine synthase (thrC) from Escherichia coli (strain K12).